A 285-amino-acid polypeptide reads, in one-letter code: MILGVIYDLLRWEEKNLIQEARKLGHTVIPIYTKDFYYFYNNDSNETLGDLDVVIQRNTSHARAVITSTIFENLSYKTINDSSTLIKCENKLYTLSLLSKHGIRVPKTIVAFSKEKALELANKLSYPVVIKPVEGSWGRMVARAIDEDTLRNFLEYQEYTTLQFRYIYLIQEFVKKPDRDIRIFTIGDEAPVGIYRVNSRNWKTNTALGAKAEPLKIDEELQDLALKVKDIIGGFFLGIDVFEDPERGYIINEVNGVPEYKNTVRVNNFNVSEYLIRKIEEWIKK.

ATP-binding positions include K91, K131, 135–141 (GSWGRMV), 171–182 (QEFVKKPDRDIR), R196, and N205. The ATP-grasp domain maps to 95–280 (LSLLSKHGIR…VSEYLIRKIE (186 aa)). D240, E253, and N255 together coordinate Mg(2+). The N-[TS] motif that is essential for LysX substrate specificity motif lies at 262-263 (NT).

The protein belongs to the RimK family. LysX subfamily. As to quaternary structure, homodimer. The cofactor is Mg(2+).

It carries out the reaction [amino-group carrier protein]-C-terminal-L-glutamate + L-2-aminoadipate + ATP = [amino-group carrier protein]-C-terminal-N-(1,4-dicarboxybutan-1-yl)-L-glutamine + ADP + phosphate + H(+). It functions in the pathway amino-acid biosynthesis; L-lysine biosynthesis via AAA pathway; L-lysine from L-alpha-aminoadipate (Thermus route): step 1/5. Catalyzes the ATP-dependent formation of a covalent bond between the amino group of alpha-aminoadipate (AAA) and the gamma-carboxyl group of the C-terminal glutamate residue in LysW. In Sulfurisphaera tokodaii (strain DSM 16993 / JCM 10545 / NBRC 100140 / 7) (Sulfolobus tokodaii), this protein is Alpha-aminoadipate--LysW ligase LysX (lysX).